The following is a 176-amino-acid chain: Cystatin-related protein 1 (176 aa).

The first 26 residues, 1-26 (MCKTLHGTLLLLAIFVLFLNFSHATA), serve as a signal peptide directing secretion. A propeptide spanning residues 27-31 (KRTRR) is cleaved from the precursor. A glycan (N-linked (GlcNAc...) asparagine) is linked at Asn71. Cystine bridges form between Cys129-Cys139 and Cys153-Cys173.

The protein belongs to the cystatin family. As to expression, prostate and lacrimal gland.

The sequence is that of Cystatin-related protein 1 (Andpro) from Rattus norvegicus (Rat).